The sequence spans 300 residues: Bifunctional protein FolD (300 aa).

NADP(+) contacts are provided by residues 169–171 and isoleucine 235; that span reads GHS.

Belongs to the tetrahydrofolate dehydrogenase/cyclohydrolase family. As to quaternary structure, homodimer.

The catalysed reaction is (6R)-5,10-methylene-5,6,7,8-tetrahydrofolate + NADP(+) = (6R)-5,10-methenyltetrahydrofolate + NADPH. It catalyses the reaction (6R)-5,10-methenyltetrahydrofolate + H2O = (6R)-10-formyltetrahydrofolate + H(+). It participates in one-carbon metabolism; tetrahydrofolate interconversion. In terms of biological role, catalyzes the oxidation of 5,10-methylenetetrahydrofolate to 5,10-methenyltetrahydrofolate and then the hydrolysis of 5,10-methenyltetrahydrofolate to 10-formyltetrahydrofolate. This is Bifunctional protein FolD from Rhodobacter capsulatus (strain ATCC BAA-309 / NBRC 16581 / SB1003).